A 164-amino-acid chain; its full sequence is 3-isopropylmalate dehydratase small subunit 1 (164 aa).

The protein belongs to the LeuD family. LeuD type 2 subfamily. Heterodimer of LeuC and LeuD.

It catalyses the reaction (2R,3S)-3-isopropylmalate = (2S)-2-isopropylmalate. Its pathway is amino-acid biosynthesis; L-leucine biosynthesis; L-leucine from 3-methyl-2-oxobutanoate: step 2/4. Functionally, catalyzes the isomerization between 2-isopropylmalate and 3-isopropylmalate, via the formation of 2-isopropylmaleate. The polypeptide is 3-isopropylmalate dehydratase small subunit 1 (leuD1) (Pyrococcus furiosus (strain ATCC 43587 / DSM 3638 / JCM 8422 / Vc1)).